The chain runs to 100 residues: Urease subunit gamma (100 aa).

It belongs to the urease gamma subunit family. Heterotrimer of UreA (gamma), UreB (beta) and UreC (alpha) subunits. Three heterotrimers associate to form the active enzyme.

The protein resides in the cytoplasm. The enzyme catalyses urea + 2 H2O + H(+) = hydrogencarbonate + 2 NH4(+). It functions in the pathway nitrogen metabolism; urea degradation; CO(2) and NH(3) from urea (urease route): step 1/1. The protein is Urease subunit gamma of Corynebacterium urealyticum (strain ATCC 43042 / DSM 7109).